The following is a 355-amino-acid chain: S-adenosylmethionine:tRNA ribosyltransferase-isomerase (355 aa).

It belongs to the QueA family. Monomer.

It localises to the cytoplasm. It carries out the reaction 7-aminomethyl-7-carbaguanosine(34) in tRNA + S-adenosyl-L-methionine = epoxyqueuosine(34) in tRNA + adenine + L-methionine + 2 H(+). It functions in the pathway tRNA modification; tRNA-queuosine biosynthesis. Its function is as follows. Transfers and isomerizes the ribose moiety from AdoMet to the 7-aminomethyl group of 7-deazaguanine (preQ1-tRNA) to give epoxyqueuosine (oQ-tRNA). The chain is S-adenosylmethionine:tRNA ribosyltransferase-isomerase from Pectobacterium carotovorum subsp. carotovorum (strain PC1).